Here is a 359-residue protein sequence, read N- to C-terminus: Stearoyl-CoA desaturase (359 aa).

Residues 1 to 72 lie on the Cytoplasmic side of the membrane; sequence MPAHLLQEEI…EGPKPKLEYV (72 aa). The chain crosses the membrane as a helical span at residues 73 to 93; the sequence is WRNIILMSLLHLGALYGITLI. Residue N75 coordinates substrate. Residues 94–97 are Lumenal-facing; it reads PTCK. A helical transmembrane segment spans residues 98 to 118; the sequence is IYTYIWVLFYYLMGALGITAG. Over 119–217 the chain is Cytoplasmic; the sequence is AHRLWSHRTY…EKLVMFQRRY (99 aa). Fe cation contacts are provided by H120 and H125. The Histidine box-1 signature appears at 120–125; it reads HRLWSH. Positions 148, 155, and 156 each coordinate substrate. 3 residues coordinate Fe cation: H157, H160, and H161. The short motif at 157 to 161 is the Histidine box-2 element; sequence HRAHH. Substrate is bound by residues R188 and K189. Residues S198 and S203 each carry the phosphoserine modification. Residues 218–237 traverse the membrane as a helical segment; sequence YKPGVLLLCFILPTLVPWYL. Over 238-241 the chain is Lumenal; that stretch reads WDET. A helical transmembrane segment spans residues 242 to 263; it reads FQNSLFFATLFRYALGLNVTWL. W262 serves as a coordination point for substrate. The Cytoplasmic segment spans residues 264–359; the sequence is VNSAAHMYGY…RTGEESYKSG (96 aa). The Fe cation site is built by H269, H298, H301, and H302. The Histidine box-3 signature appears at 298 to 302; sequence HNYHH.

Belongs to the fatty acid desaturase type 1 family. The cofactor is Fe(2+).

It localises to the endoplasmic reticulum membrane. The catalysed reaction is octadecanoyl-CoA + 2 Fe(II)-[cytochrome b5] + O2 + 2 H(+) = (9Z)-octadecenoyl-CoA + 2 Fe(III)-[cytochrome b5] + 2 H2O. It catalyses the reaction hexadecanoyl-CoA + 2 Fe(II)-[cytochrome b5] + O2 + 2 H(+) = (9Z)-hexadecenoyl-CoA + 2 Fe(III)-[cytochrome b5] + 2 H2O. Functionally, stearoyl-CoA desaturase that utilizes O(2) and electrons from reduced cytochrome b5 to introduce the first double bond into saturated fatty acyl-CoA substrates. Catalyzes the insertion of a cis double bond at the delta-9 position into fatty acyl-CoA substrates including palmitoyl-CoA and stearoyl-CoA. Gives rise to a mixture of 16:1 and 18:1 unsaturated fatty acids. Plays an important role in lipid biosynthesis. Plays an important role in regulating the expression of genes that are involved in lipogenesis and in regulating mitochondrial fatty acid oxidation. Plays an important role in body energy homeostasis. Contributes to the biosynthesis of membrane phospholipids, cholesterol esters and triglycerides. This chain is Stearoyl-CoA desaturase (SCD), found in Bos taurus (Bovine).